We begin with the raw amino-acid sequence, 1133 residues long: Envelopment polyprotein (1133 aa).

The signal sequence occupies residues 1 to 17 (MWSLLLLAALVGQGFAL). The Lumenal portion of the chain corresponds to 18-484 (KNVFDMRIQC…PGFHGWATAA (467 aa)). 11 disulfide bridges follow: cysteine 27-cysteine 149, cysteine 61-cysteine 155, cysteine 107-cysteine 126, cysteine 131-cysteine 136, cysteine 173-cysteine 183, cysteine 208-cysteine 245, cysteine 232-cysteine 349, cysteine 374-cysteine 433, cysteine 378-cysteine 387, cysteine 403-cysteine 422, and cysteine 450-cysteine 473. Asparagine 132 carries an N-linked (GlcNAc...) asparagine; by host glycan. 2 N-linked (GlcNAc...) asparagine; by host glycosylation sites follow: asparagine 233 and asparagine 345. Asparagine 397 carries an N-linked (GlcNAc...) asparagine; by host glycan. Residues 485–504 (LLITFCFGWVLIPACTLAIL) form a helical membrane-spanning segment. Topologically, residues 505-626 (LVLKFFANIL…NLFRYKSRCY (122 aa)) are cytoplasmic. Residues 514 to 531 (LHTSNQENRFKAILRKIK) are binding to the ribonucleoprotein. 2 CCHC-type zinc fingers span residues 543 to 563 (CEIC…NLSC) and 568 to 589 (CPYC…YKVC). Binding to the ribonucleoprotein regions lie at residues 586–603 (YKVC…KKTV), 590–601 (QATHRFREDLKK), and 609–623 (GPGC…RYKS). An ITAM domain is found at 609 to 632 (GPGCYRTLNLFRYKSRCYILTMWT). The short motif at 613-616 (YRTL) is the YxxL element. A helical membrane pass occupies residues 627–647 (ILTMWTLLLIIESILWAASAA). Over 648–1104 (EIPLVPLWTD…WVMGIINGNW (457 aa)) the chain is Lumenal. Disulfide bonds link cysteine 733-cysteine 768, cysteine 737-cysteine 775, cysteine 749-cysteine 883, cysteine 763-cysteine 894, cysteine 778-cysteine 902, cysteine 804-cysteine 813, cysteine 821-cysteine 830, and cysteine 861-cysteine 865. Residues 755-775 (YEYENSWACNPPDCPGVGTGC) are fusion loop. The N-linked (GlcNAc...) asparagine; by host glycan is linked to asparagine 926. Intrachain disulfides connect cysteine 968–cysteine 998, cysteine 991–cysteine 1043, cysteine 1008–cysteine 1013, cysteine 1044–cysteine 1049, and cysteine 1083–cysteine 1087. Residues 1105–1125 (VVLIVLCVLLLFSLILLSILC) traverse the membrane as a helical segment. The binding to the ribonucleoprotein stretch occupies residues 1120-1133 (LLSILCPVRKHKKS). At 1126–1133 (PVRKHKKS) the chain is on the cytoplasmic side.

This sequence belongs to the hantavirus envelope glycoprotein family. As to quaternary structure, homodimer. Homotetramer; forms heterotetrameric Gn-Gc spikes in the pre-fusion conformation. Interacts (via C-terminus) with the nucleoprotein. Interacts with host TUFM; this interaction contributes to the virus-induced degradation of mitochondria by autophagy, which leads to degradation of host MAVS and inhibition of type I interferon (IFN) responses. Interacts with host MAP1LC3B; this interaction contributes to the virus-induced degradation of mitochondria by autophagy, which leads to degradation of host MAVS and inhibition of type I interferon (IFN) responses. In terms of assembly, homodimer. Homotetramer; forms heterotetrameric Gn-Gc spikes in the pre-fusion conformation. Homotrimer; forms homotrimer in the post-fusion conformation at acidic pH. Interacts (via C-terminus) with the nucleoprotein. Post-translationally, envelope polyprotein precursor is quickly cleaved in vivo just after synthesis, presumably by host signal peptidase.

It localises to the virion membrane. Its subcellular location is the host cell surface. It is found in the host Golgi apparatus membrane. The protein resides in the host endoplasmic reticulum membrane. The protein localises to the host mitochondrion. Forms homotetramers with glycoprotein C at the surface of the virion. Attaches the virion to host cell receptors including integrin ITGAV/ITGB3. This attachment induces virion internalization predominantly through clathrin-dependent endocytosis. Mediates the assembly and budding of infectious virus particles through its interaction with the nucleocapsid protein and the viral genome. May dysregulate normal immune and endothelial cell responses through an ITAM motif. Translocates to mitochondria, binds to host TUFM and recruits MAP1LC3B. These interactions induce mitochondrial autophagy and therefore destruction of host MAVS leading to inhibition of type I interferon (IFN) responses. Concomitant breakdown of glycoprotein N is apparently prevented by the nucleoprotein that may inhibit Gn-stimulated autophagosome-lysosome fusion. Interacts with the viral genomic RNA. Functionally, forms homotetramers with glycoprotein N at the surface of the virion. Attaches the virion to host cell receptors including integrin ITGAV/ITGB3. This attachment induces virion internalization predominantly through clathrin-dependent endocytosis. Class II fusion protein that promotes fusion of viral membrane with host endosomal membrane after endocytosis of the virion. This Homo sapiens (Human) protein is Envelopment polyprotein (GP).